Here is a 460-residue protein sequence, read N- to C-terminus: Piperamide synthase (460 aa).

Positions 1-23 (MASSQLEFNVERKQPELLGPAEP) are disordered. Residues H168 and D383 each act as proton acceptor in the active site. The short motif at 458 to 460 (SRM) is the Microbody targeting signal element.

The protein belongs to the plant acyltransferase family. Monomer. In terms of tissue distribution, confined to immature fruits perisperm. Also detectable in roots.

It is found in the cytoplasm. The enzyme catalyses piperidine + (E,E)-piperoyl-CoA = piperine + CoA + H(+). It participates in aromatic compound metabolism. Its function is as follows. Involved in the biosynthesis of aromatic piperamides natural products such as piperine (1-piperoyl-piperidine), the pungent principle contributing, together with several terpenoids, to the aromatic properties of black pepper fruits, and displaying numerous pharmacological activities such as antiproliferative, antitumor, antiangiogenesis, antioxidant, antidiabetic, antiobesity, cardioprotective, antimicrobial, antiaging, and immunomodulatory effects. Can use piperidine and benzylamine as acceptors and various CoA-esters with aliphatic and aromatic amines as CoA-donors, including piperoyl-CoA, hexanoyl-CoA and octanoyl-CoA, and, to a lower extent, benzoyl-CoA. Mediates the conversion of piperidine to three piperine isomers in the presence of piperoyl-CoA. Its ability to convert in vitro piperidine to hexanoylpiperidine in the presence of hexanoyl-CoA, and to octanoylpiperidine in the presence of octanoyl-CoA is not confirmed in vivo according to fruits metabolome analysis. The protein is Piperamide synthase of Piper nigrum (Black pepper).